An 896-amino-acid chain; its full sequence is DNA mismatch repair protein MutS (896 aa).

618–625 (GPNMSGKS) serves as a coordination point for ATP. Residues 805–825 (GKESTKTGKGENKNISHKTES) show a composition bias toward basic and acidic residues. A disordered region spans residues 805–826 (GKESTKTGKGENKNISHKTESD).

This sequence belongs to the DNA mismatch repair MutS family.

Functionally, this protein is involved in the repair of mismatches in DNA. It is possible that it carries out the mismatch recognition step. This protein has a weak ATPase activity. The polypeptide is DNA mismatch repair protein MutS (Halothermothrix orenii (strain H 168 / OCM 544 / DSM 9562)).